The sequence spans 356 residues: NF-kappa-B inhibitor beta (356 aa).

Residues S19 and S23 each carry the phosphoserine; by RPS6KA1 modification. ANK repeat units follow at residues 57–86 (DGDT…GTEY), 93–122 (LGQT…GLCV), and 126–155 (RGHT…RRPR). The segment at 149–193 (PRPRRPREAPDTYLAQGPDRTPDTNHTPVALYPDSDLEKEEEESE) is disordered. Residue S183 is modified to Phosphoserine. A compositionally biased stretch (acidic residues) spans 183–193 (SDLEKEEEESE). 3 ANK repeats span residues 206–235 (EGHT…DLDK), 240–269 (CGRS…NPAA), and 273–302 (GGRT…PEPE). The disordered stretch occupies residues 298 to 356 (APEPEGEDEKSGPCSSSSDSDSGDEGDEYDDIVVHSSRSQTRLPPTPASKPLPDDPRPV). Residues S313 and S315 each carry the phosphoserine; by CK2 modification. Residues 318-328 (DSGDEGDEYDD) are compositionally biased toward acidic residues.

Belongs to the NF-kappa-B inhibitor family. As to quaternary structure, interacts with THRB (via ligand-binding domain). Interacts with RELA and REL. Interacts with COMMD1. Interacts with inhibitor kappa B-interacting Ras-like NKIRAS1 and NKIRAS2. Post-translationally, phosphorylated by RPS6KA1; followed by degradation. Interaction with NKIRAS1 and NKIRAS2 probably prevents phosphorylation. Expressed in all tissues examined.

Its subcellular location is the cytoplasm. It is found in the nucleus. In terms of biological role, inhibits NF-kappa-B by complexing with and trapping it in the cytoplasm. However, the unphosphorylated form resynthesized after cell stimulation is able to bind NF-kappa-B allowing its transport to the nucleus and protecting it to further NFKBIA-dependent inactivation. Association with inhibitor kappa B-interacting NKIRAS1 and NKIRAS2 prevent its phosphorylation rendering it more resistant to degradation, explaining its slower degradation. The polypeptide is NF-kappa-B inhibitor beta (NFKBIB) (Homo sapiens (Human)).